Reading from the N-terminus, the 83-residue chain is Short neurotoxin VAN-29 (83 aa).

Positions 1–21 are cleaved as a signal peptide; it reads MKTLLLTLVVVTIVCLDLGYT. 4 cysteine pairs are disulfide-bonded: Cys24–Cys45, Cys38–Cys62, Cys64–Cys75, and Cys76–Cys81.

This sequence belongs to the three-finger toxin family. Short-chain subfamily. Type I alpha-neurotoxin sub-subfamily. In terms of tissue distribution, expressed by the venom gland.

The protein localises to the secreted. Binds to muscle nicotinic acetylcholine receptor (nAChR) and inhibit acetylcholine from binding to the receptor, thereby impairing neuromuscular transmission. The sequence is that of Short neurotoxin VAN-29 from Laticauda laticaudata (Blue-ringed sea krait).